The sequence spans 161 residues: Ribonuclease H (161 aa).

The RNase H type-1 domain maps to 5 to 149 (EKLAIAAATD…VDAIAVAFSK (145 aa)). Mg(2+)-binding residues include aspartate 14, glutamate 53, aspartate 78, and aspartate 141.

The protein belongs to the RNase H family. In terms of assembly, monomer. The cofactor is Mg(2+).

The protein localises to the cytoplasm. The catalysed reaction is Endonucleolytic cleavage to 5'-phosphomonoester.. In terms of biological role, endonuclease that specifically degrades the RNA of RNA-DNA hybrids. This is Ribonuclease H from Prochlorococcus marinus (strain NATL2A).